The sequence spans 223 residues: uncharacterized protein (223 aa).

A run of 2 helical transmembrane segments spans residues 1 to 21 (MLIIGLCVVSMLLLSSNTFYL) and 45 to 65 (ILIGFVLALIGFIFCSGTSLI).

Its subcellular location is the cell membrane. This is an uncharacterized protein from Haemophilus influenzae (strain ATCC 51907 / DSM 11121 / KW20 / Rd).